The sequence spans 400 residues: uncharacterized protein (400 aa).

36-43 serves as a coordination point for ATP; it reads GSINSGKT.

The protein belongs to the archaeal ATPase family.

This is an uncharacterized protein from Methanocaldococcus jannaschii (strain ATCC 43067 / DSM 2661 / JAL-1 / JCM 10045 / NBRC 100440) (Methanococcus jannaschii).